We begin with the raw amino-acid sequence, 163 residues long: Small heat shock protein C1 (163 aa).

In terms of domain architecture, sHSP spans 55-163 (MFYESSSIKS…EQDAKEITIN (109 aa)).

This sequence belongs to the small heat shock protein (HSP20) family.

The protein is Small heat shock protein C1 (hspC1) of Rickettsia typhi (strain ATCC VR-144 / Wilmington).